We begin with the raw amino-acid sequence, 915 residues long: DNA (cytosine-5)-methyltransferase 2 (915 aa).

Over residues 1 to 14 (MAPSSPSSARPTRA) the composition is skewed to low complexity. A disordered region spans residues 1-171 (MAPSSPSSAR…STAANKPEED (171 aa)). Residues 15–30 (SGRERSAMAEEIHQNQ) show a composition bias toward basic and acidic residues. The span at 42 to 57 (AKRRRKAASSGKKPKP) shows a compositional bias: basic residues. Residues 71–80 (KKGETEKTEP) are compositionally biased toward basic and acidic residues. Acidic residues predominate over residues 81–108 (VVDDVCAEEPDEEELAMGEEEAEAEEQA). The span at 109–119 (MQEVVAAVAAG) shows a compositional bias: low complexity. Residues 188–313 (IVYCLGDDVY…VAYSTFANIS (126 aa)) enclose the BAH domain. Over residues 315–328 (ENGQSGSETASGIS) the composition is skewed to polar residues. Residues 315-338 (ENGQSGSETASGISSDDAGLETSS) form a disordered region. The 532-residue stretch at 345–876 (ATLLDLYSGC…YCLGQAYLGE (532 aa)) folds into the SAM-dependent MTase C5-type domain. The Chromo domain maps to 445 to 508 (FVVQKLIGIR…EGRKRKILPL (64 aa)). Residue cysteine 521 is part of the active site.

Belongs to the class I-like SAM-binding methyltransferase superfamily. C5-methyltransferase family.

The protein localises to the nucleus. It catalyses the reaction a 2'-deoxycytidine in DNA + S-adenosyl-L-methionine = a 5-methyl-2'-deoxycytidine in DNA + S-adenosyl-L-homocysteine + H(+). May be involved in the CpXpG methylation and in gene silencing. This Zea mays (Maize) protein is DNA (cytosine-5)-methyltransferase 2 (ZMET5).